Here is a 154-residue protein sequence, read N- to C-terminus: 6,7-dimethyl-8-ribityllumazine synthase (154 aa).

5-amino-6-(D-ribitylamino)uracil-binding positions include Trp-22, 56–58 (AWE), and 80–82 (CVV). 85-86 (DT) is a binding site for (2S)-2-hydroxy-3-oxobutyl phosphate. His-88 acts as the Proton donor in catalysis. Residue Asn-113 coordinates 5-amino-6-(D-ribitylamino)uracil. Arg-127 contributes to the (2S)-2-hydroxy-3-oxobutyl phosphate binding site.

The protein belongs to the DMRL synthase family. In terms of assembly, forms an icosahedral capsid composed of 60 subunits, arranged as a dodecamer of pentamers.

It carries out the reaction (2S)-2-hydroxy-3-oxobutyl phosphate + 5-amino-6-(D-ribitylamino)uracil = 6,7-dimethyl-8-(1-D-ribityl)lumazine + phosphate + 2 H2O + H(+). The protein operates within cofactor biosynthesis; riboflavin biosynthesis; riboflavin from 2-hydroxy-3-oxobutyl phosphate and 5-amino-6-(D-ribitylamino)uracil: step 1/2. Functionally, catalyzes the formation of 6,7-dimethyl-8-ribityllumazine by condensation of 5-amino-6-(D-ribitylamino)uracil with 3,4-dihydroxy-2-butanone 4-phosphate. This is the penultimate step in the biosynthesis of riboflavin. This chain is 6,7-dimethyl-8-ribityllumazine synthase, found in Xylella fastidiosa (strain M23).